We begin with the raw amino-acid sequence, 364 residues long: Pre-small/secreted glycoprotein (364 aa).

Residues M1–S32 form the signal peptide. N40 is a glycosylation site (N-linked (GlcNAc...) asparagine; by host). 2 disulfide bridges follow: C108–C135 and C121–C147. N204, N228, N238, N257, and N268 each carry an N-linked (GlcNAc...) asparagine; by host glycan.

The protein belongs to the filoviruses glycoprotein family. As to quaternary structure, homodimer; disulfide-linked. The homodimers are linked by two disulfide bonds in a parallel orientation. In terms of assembly, monomer. This precursor is processed into mature sGP and delta-peptide by host furin or furin-like proteases. The cleavage site corresponds to the furin optimal cleavage sequence [KR]-X-[KR]-R. In terms of processing, N-glycosylated. Post-translationally, O-glycosylated.

It is found in the secreted. Its function is as follows. Seems to possess an anti-inflammatory activity as it can reverse the barrier-decreasing effects of TNF alpha. Might therefore contribute to the lack of inflammatory reaction seen during infection in spite the of extensive necrosis and massive virus production. Does not seem to be involved in activation of primary macrophages. Does not seem to interact specifically with neutrophils. In terms of biological role, viroporin that permeabilizes mammalian cell plasma membranes. It acts by altering permeation of ionic compounds and small molecules. This activity may lead to viral enterotoxic activity. In Zaire ebolavirus (strain Eckron-76) (ZEBOV), this protein is Pre-small/secreted glycoprotein (GP).